We begin with the raw amino-acid sequence, 583 residues long: Undecaprenyl phosphate-alpha-4-amino-4-deoxy-L-arabinose arabinosyl transferase 2 (583 aa).

A disordered region spans residues 1–20; that stretch reads MTSRIQMHRTSPPPAYGTSA. 12 helical membrane passes run 42-62, 113-135, 145-165, 166-186, 209-229, 241-261, 290-310, 321-341, 345-365, 380-400, 409-429, and 440-460; these read LLLV…GLWI, LFGV…YLIT, SFAA…AGYS, NLDP…WFAL, FMTK…PYMI, GLVA…SIHA, WWFY…LLPG, QAPT…FSLS, LPTY…SALI, SLLN…IQLT, MLGL…NLLP, and PALG…GFIV.

It belongs to the glycosyltransferase 83 family.

It localises to the cell inner membrane. The catalysed reaction is 4-amino-4-deoxy-alpha-L-arabinopyranosyl di-trans,octa-cis-undecaprenyl phosphate + lipid IVA = lipid IIA + di-trans,octa-cis-undecaprenyl phosphate.. The protein operates within lipopolysaccharide metabolism; 4-amino-4-deoxy-beta-L-arabinose-lipid A biosynthesis. Its function is as follows. Catalyzes the transfer of the L-Ara4N moiety of the glycolipid undecaprenyl phosphate-alpha-L-Ara4N to lipid A. The modified arabinose is attached to lipid A and is required for resistance to polymyxin and cationic antimicrobial peptides. In Pseudomonas fluorescens (strain ATCC BAA-477 / NRRL B-23932 / Pf-5), this protein is Undecaprenyl phosphate-alpha-4-amino-4-deoxy-L-arabinose arabinosyl transferase 2.